Reading from the N-terminus, the 122-residue chain is Large ribosomal subunit protein uL14c (122 aa).

It belongs to the universal ribosomal protein uL14 family. Part of the 50S ribosomal subunit.

Its subcellular location is the plastid. The protein localises to the chloroplast. Its function is as follows. Binds to 23S rRNA. The sequence is that of Large ribosomal subunit protein uL14c from Anthoceros angustus (Hornwort).